Reading from the N-terminus, the 214-residue chain is MRIILLGAPGAGKGTQAQFLMGKYGIPQISTGDMLRAAIKAGTELGLEAKRVMDEGKLVSDEIIIGLVKERIAQDDCKDGFLLDGFPRTIPQADAMKEAGVSVDHCIEFDVPDDVIVERMGGRRVHPASGRVYHVVYNPPKVEGKDNETGDDLIVRDDDKEETVRKRLAIYHEQTKPLVNYYSAEAEAGNCEYHKLDGTRPVEEVSAELAERLG.

10–15 serves as a coordination point for ATP; it reads GAGKGT. The tract at residues 30 to 59 is NMP; the sequence is STGDMLRAAIKAGTELGLEAKRVMDEGKLV. AMP contacts are provided by residues threonine 31, arginine 36, 57-59, 85-88, and glutamine 92; these read KLV and GFPR. Residues 122–159 are LID; the sequence is GRRVHPASGRVYHVVYNPPKVEGKDNETGDDLIVRDDD. Residues arginine 123 and 132 to 133 contribute to the ATP site; that span reads VY. AMP is bound by residues arginine 156 and arginine 167. Arginine 200 is a binding site for ATP.

Belongs to the adenylate kinase family. As to quaternary structure, monomer.

Its subcellular location is the cytoplasm. The catalysed reaction is AMP + ATP = 2 ADP. It participates in purine metabolism; AMP biosynthesis via salvage pathway; AMP from ADP: step 1/1. In terms of biological role, catalyzes the reversible transfer of the terminal phosphate group between ATP and AMP. Plays an important role in cellular energy homeostasis and in adenine nucleotide metabolism. The protein is Adenylate kinase of Alteromonas mediterranea (strain DSM 17117 / CIP 110805 / LMG 28347 / Deep ecotype).